The chain runs to 759 residues: Protein hunchback (759 aa).

Disordered regions lie at residues 30-51 (EPGH…PIPS) and 171-215 (SSEK…EDMK). The span at 39–51 (SVASSPRQSPIPS) shows a compositional bias: polar residues. T179 carries the phosphothreonine modification. Residues S189, S208, S210, and S211 each carry the phosphoserine modification. Residues 199–215 (EPEKEHDQMSNSSEDMK) are compositionally biased toward basic and acidic residues. 4 consecutive C2H2-type zinc fingers follow at residues 241 to 263 (YKCK…TRTH), 270 to 292 (LQCP…IRKH), 298 to 320 (FQCD…RKSH), and 326 to 350 (YRCA…KYGH). Disordered regions lie at residues 366–419 (LVID…TSQL), 513–565 (QLQQ…PQQP), and 606–696 (MTSP…APAS). 2 stretches are compositionally biased toward low complexity: residues 399 to 419 (VAAV…TSQL) and 513 to 522 (QLQQQNQQQS). A compositionally biased stretch (acidic residues) spans 523–532 (DNEEEEQDDE). Residues S537 and S540 each carry the phosphoserine modification. Positions 655 to 696 (ANTSASSTASSSGNSSNASSNGNSSSNSSSNGTSSAAAAPAS) are enriched in low complexity. 2 consecutive C2H2-type zinc fingers follow at residues 706-728 (YECK…MGYH) and 734-758 (FKCN…RNAH).

It belongs to the hunchback C2H2-type zinc-finger protein family.

The protein resides in the nucleus. Its function is as follows. Gap class segmentation protein that controls development of head structures. This Drosophila yakuba (Fruit fly) protein is Protein hunchback.